Here is a 180-residue protein sequence, read N- to C-terminus: Large ribosomal subunit protein uL6 (180 aa).

It belongs to the universal ribosomal protein uL6 family. As to quaternary structure, part of the 50S ribosomal subunit.

Its function is as follows. This protein binds to the 23S rRNA, and is important in its secondary structure. It is located near the subunit interface in the base of the L7/L12 stalk, and near the tRNA binding site of the peptidyltransferase center. The protein is Large ribosomal subunit protein uL6 of Thermus thermophilus (strain ATCC BAA-163 / DSM 7039 / HB27).